The primary structure comprises 159 residues: Large ribosomal subunit protein uL15 (159 aa).

A disordered region spans residues 1–46 (MKLNELSPSVPKKNRKRIGRGNSSGWGKTAGKGSNGQNSRAGGGVK). Residues 22–34 (NSSGWGKTAGKGS) show a composition bias toward gly residues.

It belongs to the universal ribosomal protein uL15 family. As to quaternary structure, part of the 50S ribosomal subunit.

Its function is as follows. Binds to the 23S rRNA. This Fusobacterium nucleatum subsp. nucleatum (strain ATCC 25586 / DSM 15643 / BCRC 10681 / CIP 101130 / JCM 8532 / KCTC 2640 / LMG 13131 / VPI 4355) protein is Large ribosomal subunit protein uL15.